The chain runs to 383 residues: UDP-N-acetylglucosamine--N-acetylmuramyl-(pentapeptide) pyrophosphoryl-undecaprenol N-acetylglucosamine transferase (383 aa).

UDP-N-acetyl-alpha-D-glucosamine-binding positions include T10 to G12, N124, R165, S190, I245, and Q290. The interval S363–S383 is disordered.

The protein belongs to the glycosyltransferase 28 family. MurG subfamily.

Its subcellular location is the cell inner membrane. The catalysed reaction is di-trans,octa-cis-undecaprenyl diphospho-N-acetyl-alpha-D-muramoyl-L-alanyl-D-glutamyl-meso-2,6-diaminopimeloyl-D-alanyl-D-alanine + UDP-N-acetyl-alpha-D-glucosamine = di-trans,octa-cis-undecaprenyl diphospho-[N-acetyl-alpha-D-glucosaminyl-(1-&gt;4)]-N-acetyl-alpha-D-muramoyl-L-alanyl-D-glutamyl-meso-2,6-diaminopimeloyl-D-alanyl-D-alanine + UDP + H(+). It functions in the pathway cell wall biogenesis; peptidoglycan biosynthesis. Cell wall formation. Catalyzes the transfer of a GlcNAc subunit on undecaprenyl-pyrophosphoryl-MurNAc-pentapeptide (lipid intermediate I) to form undecaprenyl-pyrophosphoryl-MurNAc-(pentapeptide)GlcNAc (lipid intermediate II). The protein is UDP-N-acetylglucosamine--N-acetylmuramyl-(pentapeptide) pyrophosphoryl-undecaprenol N-acetylglucosamine transferase of Anaeromyxobacter dehalogenans (strain 2CP-1 / ATCC BAA-258).